Reading from the N-terminus, the 164-residue chain is Peroxynitrite isomerase (164 aa).

The short motif at glycine 21 to glycine 27 is the GXWXGXG element. Heme b-binding residues include lysine 130 and histidine 156.

Belongs to the nitrobindin family. In terms of assembly, homodimer. It depends on heme b as a cofactor.

It catalyses the reaction peroxynitrite = nitrate. It functions in the pathway nitrogen metabolism. In terms of biological role, heme-binding protein able to scavenge peroxynitrite and to protect free L-tyrosine against peroxynitrite-mediated nitration, by acting as a peroxynitrite isomerase that converts peroxynitrite to nitrate. Therefore, this protein likely plays a role in peroxynitrite sensing and in the detoxification of reactive nitrogen and oxygen species (RNS and ROS, respectively). Is able to bind nitric oxide (NO) in vitro, but may act as a sensor of peroxynitrite levels in vivo. The chain is Peroxynitrite isomerase from Nocardioides sp. (strain ATCC BAA-499 / JS614).